A 438-amino-acid chain; its full sequence is Methylenetetrahydrofolate--tRNA-(uracil-5-)-methyltransferase TrmFO (438 aa).

7 to 12 (GAGLAG) is a binding site for FAD.

Belongs to the MnmG family. TrmFO subfamily. FAD is required as a cofactor.

It is found in the cytoplasm. It carries out the reaction uridine(54) in tRNA + (6R)-5,10-methylene-5,6,7,8-tetrahydrofolate + NADH + H(+) = 5-methyluridine(54) in tRNA + (6S)-5,6,7,8-tetrahydrofolate + NAD(+). The catalysed reaction is uridine(54) in tRNA + (6R)-5,10-methylene-5,6,7,8-tetrahydrofolate + NADPH + H(+) = 5-methyluridine(54) in tRNA + (6S)-5,6,7,8-tetrahydrofolate + NADP(+). In terms of biological role, catalyzes the folate-dependent formation of 5-methyl-uridine at position 54 (M-5-U54) in all tRNAs. The sequence is that of Methylenetetrahydrofolate--tRNA-(uracil-5-)-methyltransferase TrmFO from Sulfurihydrogenibium sp. (strain YO3AOP1).